The sequence spans 38 residues: NAD-reducing hydrogenase HoxS subunit beta (38 aa).

Belongs to the [NiFe]/[NiFeSe] hydrogenase large subunit family. Tetramer of an alpha and a gamma subunits (flavin-containing dimer), and a delta and a nickel-containing beta subunits (hydrogenase dimer). It depends on FMN as a cofactor. Ni(2+) is required as a cofactor.

The protein localises to the cytoplasm. The enzyme catalyses H2 + NAD(+) = NADH + H(+). This is NAD-reducing hydrogenase HoxS subunit beta (hoxH) from Rhodococcus opacus (Nocardia opaca).